The primary structure comprises 593 residues: Pyruvate decarboxylase 1 (593 aa).

Residues 1–19 show a composition bias toward polar residues; sequence METETETPNGSTPCPTSAP. Residues 1 to 20 form a disordered region; that stretch reads METETETPNGSTPCPTSAPS. 2 residues coordinate substrate: aspartate 55 and histidine 142. Residues 420–502 form a thiamine pyrophosphate binding region; sequence DSWFNCQKLR…FLINNGGYTI (83 aa). Residues aspartate 470, asparagine 497, and glycine 499 each coordinate Mg(2+). Glutamate 503 is a binding site for substrate.

It belongs to the TPP enzyme family. Homotetramer. The cofactor is a metal cation. Requires thiamine diphosphate as cofactor.

The catalysed reaction is a 2-oxocarboxylate + H(+) = an aldehyde + CO2. The chain is Pyruvate decarboxylase 1 (PDC1) from Pisum sativum (Garden pea).